A 270-amino-acid chain; its full sequence is 4-hydroxy-tetrahydrodipicolinate reductase (270 aa).

NAD(+) contacts are provided by residues 9–14 (GSGGRM) and glutamate 35. Arginine 36 is a binding site for NADP(+). NAD(+) is bound by residues 99-101 (GTT) and 123-126 (ASNY). Histidine 156 acts as the Proton donor/acceptor in catalysis. Histidine 157 lines the (S)-2,3,4,5-tetrahydrodipicolinate pocket. Lysine 160 serves as the catalytic Proton donor. Residue 166 to 167 (GT) participates in (S)-2,3,4,5-tetrahydrodipicolinate binding.

This sequence belongs to the DapB family.

The protein localises to the cytoplasm. The catalysed reaction is (S)-2,3,4,5-tetrahydrodipicolinate + NAD(+) + H2O = (2S,4S)-4-hydroxy-2,3,4,5-tetrahydrodipicolinate + NADH + H(+). It catalyses the reaction (S)-2,3,4,5-tetrahydrodipicolinate + NADP(+) + H2O = (2S,4S)-4-hydroxy-2,3,4,5-tetrahydrodipicolinate + NADPH + H(+). It participates in amino-acid biosynthesis; L-lysine biosynthesis via DAP pathway; (S)-tetrahydrodipicolinate from L-aspartate: step 4/4. Its function is as follows. Catalyzes the conversion of 4-hydroxy-tetrahydrodipicolinate (HTPA) to tetrahydrodipicolinate. In Histophilus somni (strain 2336) (Haemophilus somnus), this protein is 4-hydroxy-tetrahydrodipicolinate reductase.